The chain runs to 163 residues: MRIEKCYFCSGPIYPGHGMMFVRNDCKVFRFCKSKCHKNFKKKRNPRKVRWTKAFRKAAGKELTVDNSFEFEKRRNEPVKYQRELWNKTIDAMKRVEEIKQKRQAKFIMNRLKKNKELQKVQDIKEVKQNIHLIRAPLAGKGKQLEEKMVQQLQEDVDMEEAS.

It belongs to the eukaryotic ribosomal protein eL24 family. Associated with nucleolar and cytoplasmic pre-60S particles. At the end of biogenesis it dissociates from cytoplasmic pre-60S particles and is likely to be exchanged for its ribosomal homolog, RPL24.

It is found in the nucleus. The protein localises to the nucleolus. In terms of biological role, involved in the biogenesis of the 60S ribosomal subunit. Ensures the docking of GTPBP4/NOG1 to pre-60S particles. This chain is Probable ribosome biogenesis protein RLP24 (Rsl24d1), found in Mus musculus (Mouse).